Reading from the N-terminus, the 341-residue chain is uncharacterized protein (341 aa).

10 helical membrane-spanning segments follow: residues 10–30 (ALGVVLLLFVVFLWLISSFLT), 42–62 (PFLITYINTGTFVFYLIPWYF), 107–127 (LGFCIIWFAANYFSNSSLGFT), 129–149 (VASFTIISSMSGFFTLGLGTI), 155–175 (FTLSKLLALMASVGGVIIVVT), 192–212 (ALGNAYALLAALLYGCYSVMV), 226–246 (LFFGLVGLFDLILLWPFLIIL), 263–283 (LIVLIINASITFVSDYLWVIA), 290–310 (LLVTVGMSLSIPLALFFDILL), and 313–333 (HYLNFSLILGSLLVFAGFIVV).

It belongs to the TPT transporter family.

Its subcellular location is the vacuole membrane. It is found in the golgi apparatus membrane. This is an uncharacterized protein from Schizosaccharomyces pombe (strain 972 / ATCC 24843) (Fission yeast).